We begin with the raw amino-acid sequence, 432 residues long: N-acylneuraminate cytidylyltransferase (432 aa).

Met-1 carries the post-translational modification N-acetylmethionine. Positions 1-38 are disordered; sequence MDALEKGAATSGPAPRGRPSRGRPPKLQRSRGAGRGLE. Residues 15–31 carry the BC1 motif motif; the sequence is PRGRPSRGRPPKLQRSR. Residues 18 to 29 show a composition bias toward basic residues; it reads RPSRGRPPKLQR. Omega-N-methylarginine occurs at positions 35 and 50. Positions 50, 60, 109, 118, 120, and 141 each coordinate substrate. The short motif at 198–204 is the BC2 motif element; that stretch reads KRPRRQD. Residue Arg-199 is part of the active site. The BC3 motif signature appears at 267 to 274; the sequence is KEKLKEIK.

It belongs to the CMP-NeuNAc synthase family. Homotetramer; the active enzyme is formed by a dimer of dimers. As to expression, liver.

The protein resides in the nucleus. The enzyme catalyses an N-acylneuraminate + CTP = a CMP-N-acyl-beta-neuraminate + diphosphate. It participates in amino-sugar metabolism; N-acetylneuraminate metabolism. Its function is as follows. Catalyzes the activation of N-acetylneuraminic acid (NeuNAc) to cytidine 5'-monophosphate N-acetylneuraminic acid (CMP-NeuNAc), a substrate required for the addition of sialic acid. Has some activity toward NeuNAc, N-glycolylneuraminic acid (Neu5Gc) or 2-keto-3-deoxy-D-glycero-D-galacto-nononic acid (KDN). This chain is N-acylneuraminate cytidylyltransferase (Cmas), found in Rattus norvegicus (Rat).